The primary structure comprises 220 residues: Glutathione S-transferase U26 (220 aa).

The GST N-terminal domain maps to 4 to 83 (DQVILLDYWP…YIDEVWSDAS (80 aa)). Glutathione contacts are provided by residues 14–15 (SM), 40–41 (VK), 54–55 (KI), and 67–68 (ES). The region spanning 89–210 (DPYQKSRARF…ADSDRIIEYV (122 aa)) is the GST C-terminal domain.

Belongs to the GST superfamily. Tau family.

The protein resides in the cytoplasm. The protein localises to the cytosol. The catalysed reaction is RX + glutathione = an S-substituted glutathione + a halide anion + H(+). Its function is as follows. In vitro, possesses glutathione S-transferase activity toward 1-chloro-2,4-dinitrobenzene (CDNB). May be involved in the conjugation of reduced glutathione to a wide number of exogenous and endogenous hydrophobic electrophiles and have a detoxification role against certain herbicides. The chain is Glutathione S-transferase U26 (GSTU26) from Arabidopsis thaliana (Mouse-ear cress).